Reading from the N-terminus, the 408-residue chain is CinA-like protein (408 aa).

Belongs to the CinA family.

The protein is CinA-like protein of Anaeromyxobacter dehalogenans (strain 2CP-C).